Reading from the N-terminus, the 380-residue chain is Cytochrome b (380 aa).

4 consecutive transmembrane segments (helical) span residues 34–54 (FGSL…LLAM), 78–99 (WLIR…YLHI), 114–134 (WNIG…GYVL), and 179–199 (LFAL…VHLT). Residues His-84 and His-98 each contribute to the heme b site. Residues His-183 and His-197 each coordinate heme b. His-202 lines the a ubiquinone pocket. 4 helical membrane passes run 227-247 (IKDL…ALFA), 289-309 (LGGV…PLLH), 321-341 (LSQM…WVGS), and 348-368 (FIII…VLFP).

Belongs to the cytochrome b family. The cytochrome bc1 complex contains 11 subunits: 3 respiratory subunits (MT-CYB, CYC1 and UQCRFS1), 2 core proteins (UQCRC1 and UQCRC2) and 6 low-molecular weight proteins (UQCRH/QCR6, UQCRB/QCR7, UQCRQ/QCR8, UQCR10/QCR9, UQCR11/QCR10 and a cleavage product of UQCRFS1). This cytochrome bc1 complex then forms a dimer. Heme b serves as cofactor.

It is found in the mitochondrion inner membrane. In terms of biological role, component of the ubiquinol-cytochrome c reductase complex (complex III or cytochrome b-c1 complex) that is part of the mitochondrial respiratory chain. The b-c1 complex mediates electron transfer from ubiquinol to cytochrome c. Contributes to the generation of a proton gradient across the mitochondrial membrane that is then used for ATP synthesis. The protein is Cytochrome b (MT-CYB) of Aphelocoma coerulescens (Florida scrub-jay).